Here is a 35-residue protein sequence, read N- to C-terminus: Photosystem II reaction center protein T (35 aa).

Residues 3–23 (ALVYTFLLVSTLGIIFFAIFF) traverse the membrane as a helical segment.

It belongs to the PsbT family. As to quaternary structure, PSII is composed of 1 copy each of membrane proteins PsbA, PsbB, PsbC, PsbD, PsbE, PsbF, PsbH, PsbI, PsbJ, PsbK, PsbL, PsbM, PsbT, PsbY, PsbZ, Psb30/Ycf12, at least 3 peripheral proteins of the oxygen-evolving complex and a large number of cofactors. It forms dimeric complexes.

The protein localises to the plastid. It localises to the chloroplast thylakoid membrane. Functionally, found at the monomer-monomer interface of the photosystem II (PS II) dimer, plays a role in assembly and dimerization of PSII. PSII is a light-driven water plastoquinone oxidoreductase, using light energy to abstract electrons from H(2)O, generating a proton gradient subsequently used for ATP formation. This is Photosystem II reaction center protein T from Nelumbo lutea (American lotus).